A 251-amino-acid polypeptide reads, in one-letter code: CDP-diacylglycerol pyrophosphatase (251 aa).

A helical transmembrane segment spans residues 4–24 (AGLLFLVMIVIAVVAAGIGYW).

This sequence belongs to the Cdh family.

The protein localises to the cell inner membrane. The catalysed reaction is a CDP-1,2-diacyl-sn-glycerol + H2O = a 1,2-diacyl-sn-glycero-3-phosphate + CMP + 2 H(+). Its pathway is phospholipid metabolism; CDP-diacylglycerol degradation; phosphatidate from CDP-diacylglycerol: step 1/1. In Escherichia coli O9:H4 (strain HS), this protein is CDP-diacylglycerol pyrophosphatase.